Reading from the N-terminus, the 420-residue chain is Tyrosine--tRNA ligase (420 aa).

An L-tyrosine-binding site is contributed by Tyr33. A 'HIGH' region motif is present at residues Pro38 to His47. L-tyrosine is bound by residues Tyr167 and Gln171. The 'KMSKS' region signature appears at Lys227–Thr231. Residue Lys230 participates in ATP binding. The S4 RNA-binding domain maps to Leu353–Val419.

Belongs to the class-I aminoacyl-tRNA synthetase family. TyrS type 1 subfamily. In terms of assembly, homodimer.

It is found in the cytoplasm. The catalysed reaction is tRNA(Tyr) + L-tyrosine + ATP = L-tyrosyl-tRNA(Tyr) + AMP + diphosphate + H(+). Its function is as follows. Catalyzes the attachment of tyrosine to tRNA(Tyr) in a two-step reaction: tyrosine is first activated by ATP to form Tyr-AMP and then transferred to the acceptor end of tRNA(Tyr). This Anaeromyxobacter dehalogenans (strain 2CP-C) protein is Tyrosine--tRNA ligase.